Consider the following 159-residue polypeptide: Large ribosomal subunit protein uL22 (159 aa).

The protein belongs to the universal ribosomal protein uL22 family. Part of the 50S ribosomal subunit.

Functionally, this protein binds specifically to 23S rRNA. It makes multiple contacts with different domains of the 23S rRNA in the assembled 50S subunit and ribosome. Its function is as follows. The globular domain of the protein is located near the polypeptide exit tunnel on the outside of the subunit, while an extended beta-hairpin is found that lines the wall of the exit tunnel in the center of the 70S ribosome. The protein is Large ribosomal subunit protein uL22 of Methanopyrus kandleri (strain AV19 / DSM 6324 / JCM 9639 / NBRC 100938).